The chain runs to 385 residues: POU domain, class 3, transcription factor 2-B (385 aa).

3 disordered regions span residues 106-136 (LVHP…SSNG), 149-209 (NGMI…TPTS), and 351-385 (EKRM…TSVQ). The span at 122 to 136 (STGSTHLSSMASSNG) shows a compositional bias: polar residues. A compositionally biased stretch (basic and acidic residues) spans 165–178 (LRDSHDDHHGDHGH). Positions 179-196 (QQPSQTQQQQQQHSQLQG) are enriched in low complexity. The POU-specific domain maps to 204 to 278 (EDTPTSDDLE…LLNKWLEEAD (75 aa)). A DNA-binding region (homeobox) is located at residues 296 to 355 (KRKKRTSIEVSVKGALESHFLKCPKPAAQEITSLADSLQLEKEVVRVWFCNRRQKEKRMT).

Belongs to the POU transcription factor family. Class-3 subfamily. In terms of tissue distribution, expressed in the developing brain and spinal cord. Also found in a restricted region of the auditory vesicle during development. In the adult, expression is restricted to the brain.

It localises to the nucleus. In terms of biological role, transcription factor that may be implicated in patterning of the central nervous system during early development. The sequence is that of POU domain, class 3, transcription factor 2-B (pou3f2-b) from Xenopus laevis (African clawed frog).